The primary structure comprises 142 residues: Relaxin-3 (142 aa).

A signal peptide spans 1-25; that stretch reads MARYMLLLLLAVWVLTGELWPGAEA. 3 disulfides stabilise this stretch: Cys-35-Cys-129, Cys-47-Cys-142, and Cys-128-Cys-133. Positions 55–118 are cleaved as a propeptide — connecting peptide; the sequence is SDILAHEAMG…GTPGVLRGSR (64 aa).

It belongs to the insulin family. Heterodimer of a B chain and an A chain linked by two disulfide bonds.

The protein localises to the secreted. Functionally, may play a role in neuropeptide signaling processes. Ligand for LGR7, RXFP3 and RXFP4. This chain is Relaxin-3 (RLN3), found in Homo sapiens (Human).